A 301-amino-acid chain; its full sequence is Methionyl-tRNA formyltransferase (301 aa).

Position 109 to 112 (109 to 112) interacts with (6S)-5,6,7,8-tetrahydrofolate; it reads SLLP.

Belongs to the Fmt family.

The catalysed reaction is L-methionyl-tRNA(fMet) + (6R)-10-formyltetrahydrofolate = N-formyl-L-methionyl-tRNA(fMet) + (6S)-5,6,7,8-tetrahydrofolate + H(+). Functionally, attaches a formyl group to the free amino group of methionyl-tRNA(fMet). The formyl group appears to play a dual role in the initiator identity of N-formylmethionyl-tRNA by promoting its recognition by IF2 and preventing the misappropriation of this tRNA by the elongation apparatus. The sequence is that of Methionyl-tRNA formyltransferase from Ruegeria pomeroyi (strain ATCC 700808 / DSM 15171 / DSS-3) (Silicibacter pomeroyi).